Reading from the N-terminus, the 289-residue chain is Fumagillin beta-trans-bergamotene synthase af520 (289 aa).

6 helical membrane passes run 35-55 (AVAL…GFLW), 95-115 (TLLY…TNTI), 142-162 (LIGA…FDGG), 165-185 (LHGL…TTGH), 222-242 (AWTI…LAYV), and 262-282 (YVSY…PIFP).

It belongs to the paxB family.

The protein localises to the membrane. It carries out the reaction (2E,6E)-farnesyl diphosphate = (+)-exo-beta-bergamotene + diphosphate. Its pathway is secondary metabolite biosynthesis; terpenoid biosynthesis. Functionally, beta-trans-bergamotene synthase; part of the gene cluster that mediates the biosynthesis of fumagillin, a meroterpenoid that has numerous biological activities including irreversible inhibition of human type 2 methionine aminopeptidase (METAP2). Within the pathway, the membrane-bound fumagillin beta-trans-bergamotene synthase af520 converts farnesyl pyrophosphate (FPP) to beta-trans-bergamotene. The pathway begins with the conversion of FPP to beta-trans-bergamotene by af520. The multifunctional cytochrome P450 monooxygenase af510 then converts beta-trans-bergamotene into 5-keto-demethoxyfumagillol via several oxydation steps. 5-keto-demethoxyfumagillol is then subjected to successive C-6 hydroxylation and O-methylation by the dioxygenase af480 and O-methyltransferase af390-400, respectively, to yield 5-keto-fumagillol, which is then stereoselectively reduced by the keto-reductase af490 to 5R-hydroxy-seco-sesquiterpene. The next step is the polyketide transferase af380-catalyzed transfer of a dodecapentaenoyl group synthesized by the polyketide synthase af370 onto 5R-hydroxy-seco-sesquiterpene which leads to the production of prefumagillin. Finally, oxidative cleavage by the monooxygenase af470 converts prefumagillin to fumagillin. In Aspergillus fumigatus (strain ATCC MYA-4609 / CBS 101355 / FGSC A1100 / Af293) (Neosartorya fumigata), this protein is Fumagillin beta-trans-bergamotene synthase af520.